Reading from the N-terminus, the 730-residue chain is Jacalin-related lectin 5 (730 aa).

The Jacalin-type lectin 1 domain occupies 1-126 (MSWDDGKHTK…LNSIDAHFAP (126 aa)). The segment at 121–450 (DAHFAPAPPP…GNQWDDGTDH (330 aa)) is disordered. Composition is skewed to low complexity over residues 138–153 (GASG…GSAG), 168–179 (AGGSKPSSGSAG), 196–207 (AGGSKPSSGSAG), and 248–261 (TEKN…SSGS). Residues 275-307 (ETVSNIGDTESNAGGSKSNDGANNGASGIESNA) show a composition bias toward polar residues. The span at 314-323 (FGAGGTGGIG) shows a compositional bias: gly residues. Residues 343-358 (DGASGIGSNDGSTGTN) are compositionally biased toward low complexity. 2 stretches are compositionally biased toward polar residues: residues 366-375 (DSNIEGTENN) and 388-416 (IGNS…TGGK). Residues 417–429 (ESNTGSESNTNSS) show a composition bias toward low complexity. Jacalin-type lectin domains lie at 430–572 (PQKL…YFVP) and 584–727 (PNKV…YFIP).

It belongs to the jacalin lectin family.

In Arabidopsis thaliana (Mouse-ear cress), this protein is Jacalin-related lectin 5 (JAL5).